We begin with the raw amino-acid sequence, 455 residues long: Beta-cyclopiazonate dehydrogenase (455 aa).

The signal sequence occupies residues 1-25 (MAVRIARFLGLSTVAYLALANGIDA).

Belongs to the beta-cyclopiazonate dehydrogenase family. The cofactor is FAD.

It catalyses the reaction beta-cyclopiazonate + A = alpha-cyclopiazonate + AH2. Beta-cyclopiazonate dehydrogenase involved in the synthesis of the fungal neurotoxin alpha-cyclopiazonic acid (CPA). CpaO carries out the dehydrogenation of beta-CPA to yield an unstable enimine product, which is captured by intramolecular cyclization to create the pentacyclic fused scaffold of alpha-cyclopiazonate. This is Beta-cyclopiazonate dehydrogenase from Aspergillus oryzae (strain ATCC 42149 / RIB 40) (Yellow koji mold).